We begin with the raw amino-acid sequence, 324 residues long: Fructose-1,6-bisphosphatase class 1 (324 aa).

Residues glutamate 88, aspartate 107, leucine 109, and aspartate 110 each contribute to the Mg(2+) site. Substrate is bound by residues 110-113 (DGSS), asparagine 199, and lysine 265. Glutamate 271 contacts Mg(2+).

This sequence belongs to the FBPase class 1 family. Homotetramer. The cofactor is Mg(2+).

It is found in the cytoplasm. The catalysed reaction is beta-D-fructose 1,6-bisphosphate + H2O = beta-D-fructose 6-phosphate + phosphate. It participates in carbohydrate biosynthesis; gluconeogenesis. The protein is Fructose-1,6-bisphosphatase class 1 of Neisseria gonorrhoeae (strain ATCC 700825 / FA 1090).